The following is a 291-amino-acid chain: ATP phosphoribosyltransferase (291 aa).

Belongs to the ATP phosphoribosyltransferase family. Long subfamily. It depends on Mg(2+) as a cofactor.

Its subcellular location is the cytoplasm. The enzyme catalyses 1-(5-phospho-beta-D-ribosyl)-ATP + diphosphate = 5-phospho-alpha-D-ribose 1-diphosphate + ATP. The protein operates within amino-acid biosynthesis; L-histidine biosynthesis; L-histidine from 5-phospho-alpha-D-ribose 1-diphosphate: step 1/9. Its activity is regulated as follows. Feedback inhibited by histidine. Catalyzes the condensation of ATP and 5-phosphoribose 1-diphosphate to form N'-(5'-phosphoribosyl)-ATP (PR-ATP). Has a crucial role in the pathway because the rate of histidine biosynthesis seems to be controlled primarily by regulation of HisG enzymatic activity. The chain is ATP phosphoribosyltransferase from Geotalea daltonii (strain DSM 22248 / JCM 15807 / FRC-32) (Geobacter daltonii).